The chain runs to 653 residues: Modification methylase StsI (653 aa).

Belongs to the N(4)/N(6)-methyltransferase family. In terms of assembly, monomer.

It catalyses the reaction a 2'-deoxyadenosine in DNA + S-adenosyl-L-methionine = an N(6)-methyl-2'-deoxyadenosine in DNA + S-adenosyl-L-homocysteine + H(+). Functionally, an alpha subtype methylase that recognizes the double-stranded sequence 5'-GGATG-3' in one strand and 3'-CATCC-5' in the other, methylates A of both strands, and protects the DNA from cleavage by the StsI endonuclease. The 2 domains of the protein participate in modification of the two strands. The protein is Modification methylase StsI (stsIM) of Streptococcus sanguinis.